A 313-amino-acid chain; its full sequence is Adhesin MafA 1 (313 aa).

The N-terminal stretch at M1–A14 is a signal peptide. The N-palmitoyl cysteine moiety is linked to residue C15. The S-diacylglycerol cysteine moiety is linked to residue C15. A compositionally biased stretch (polar residues) spans G282–K298. The disordered stretch occupies residues G282 to G313.

It belongs to the MafA family.

Its subcellular location is the cell outer membrane. The sequence is that of Adhesin MafA 1 (mafA1) from Neisseria meningitidis serogroup C / serotype 2a (strain ATCC 700532 / DSM 15464 / FAM18).